Reading from the N-terminus, the 443-residue chain is MVVDKNASGLRMKVDGKWLYLSEELVKKHPGGAVIEQYRNSDATHIFHAFHEGSSQAYKQLDLLKKHGEHDEFLEKQLEKRLDKVDINVSAYDVSVAQEKKMVESFEKLRQKLHDDGLMKANETYFLFKAISTLSIMAFAFYLQYLGWYITSACLLALAWQQFGWLTHEFCHQQPTKNRPLNDTISLFFGNFLQGFSRDWWKDKHNTHHAATNVIDHDGDIDLAPLFAFIPGDLCKYKASFEKAILKIVPYQHLYFTAMLPMLRFSWTGQSVQWVFKENQMEYKVYQRNAFWEQATIVGHWAWVFYQLFLLPTWPLRVAYFIISQMGGGLLIAHVVTFNHNSVDKYPANSRILNNFAALQILTTRNMTPSPFIDWLWGGLNYQIEHHLFPTMPRCNLNACMKYVKEWCKENNLPYLVDDYFDGYAMNLQQLKNMAEHIQAKAA.

The region spanning 1 to 71 (MVVDKNASGL…DLLKKHGEHD (71 aa)) is the Cytochrome b5 heme-binding domain. 3 helical membrane passes run 136–156 (IMAFAFYLQYLGWYITSACLL), 296–316 (TIVGHWAWVFYQLFLLPTWPL), and 318–338 (VAYFIISQMGGGLLIAHVVTF).

Belongs to the fatty acid desaturase type 1 family.

The protein resides in the membrane. The catalysed reaction is (9Z,12Z)-octadecadienoyl-CoA + 2 Fe(II)-[cytochrome b5] + O2 + 2 H(+) = (6Z,9Z,12Z)-octadecatrienoyl-CoA + 2 Fe(III)-[cytochrome b5] + 2 H2O. It carries out the reaction (9Z,12Z,15Z)-octadecatrienoyl-CoA + 2 Fe(II)-[cytochrome b5] + O2 + 2 H(+) = (6Z,9Z,12Z,15Z)-octadecatetraenoyl-CoA + 2 Fe(III)-[cytochrome b5] + 2 H2O. The protein operates within lipid metabolism; polyunsaturated fatty acid biosynthesis. Can function as a Delta(6) fatty acid desaturase. Introduces a double bond in the fatty acid chain 6 carbons away from carboxy terminal to biosynthesize polyunsaturated fatty acids (PUFAs) endogenously (PUFAs are essential for membrane structure and many cellular and physiological processes). Acts on a variety of substrates such as linoleoyl-CoA ((9Z,12Z)-octadecadienoyl-CoA, C18:2n-6) and alpha-linolenoyl-CoA ((9Z,12Z,15Z)-octadecatrienoyl-CoA, C18:3n-3) to produce gamma-linolenoyl-CoA ((6Z,9Z,12Z)-octadecatrienoyl-CoA, C18:3n-6) and (6Z,9Z,12Z,15Z)-octadecatetraenoyl-CoA (18:4n-3) respectively. Unlike plants, Caenorhabditis elegans desaturases seem to use fatty acyl-CoAs as substrates. Plays a role in synaptic vesicle recycling by regulating synaptojanin unc-26 localization at synapses. This Caenorhabditis elegans protein is Delta(6)-fatty-acid desaturase fat-3 (fat-3).